Consider the following 489-residue polypeptide: Protein nucleotidyltransferase YdiU (489 aa).

ATP-binding residues include Gly-88, Gly-90, Arg-91, Lys-111, Asp-123, Gly-124, Arg-174, and Arg-181. The Proton acceptor role is filled by Asp-250. Positions 251 and 260 each coordinate Mg(2+). Residue Asp-260 coordinates ATP.

The protein belongs to the SELO family. The cofactor is Mg(2+). It depends on Mn(2+) as a cofactor.

It catalyses the reaction L-seryl-[protein] + ATP = 3-O-(5'-adenylyl)-L-seryl-[protein] + diphosphate. The catalysed reaction is L-threonyl-[protein] + ATP = 3-O-(5'-adenylyl)-L-threonyl-[protein] + diphosphate. The enzyme catalyses L-tyrosyl-[protein] + ATP = O-(5'-adenylyl)-L-tyrosyl-[protein] + diphosphate. It carries out the reaction L-histidyl-[protein] + UTP = N(tele)-(5'-uridylyl)-L-histidyl-[protein] + diphosphate. It catalyses the reaction L-seryl-[protein] + UTP = O-(5'-uridylyl)-L-seryl-[protein] + diphosphate. The catalysed reaction is L-tyrosyl-[protein] + UTP = O-(5'-uridylyl)-L-tyrosyl-[protein] + diphosphate. Nucleotidyltransferase involved in the post-translational modification of proteins. It can catalyze the addition of adenosine monophosphate (AMP) or uridine monophosphate (UMP) to a protein, resulting in modifications known as AMPylation and UMPylation. This is Protein nucleotidyltransferase YdiU from Vibrio cholerae serotype O1 (strain ATCC 39315 / El Tor Inaba N16961).